The sequence spans 462 residues: 3-deoxy-D-manno-octulosonic acid transferase (462 aa).

Residues 2-22 (MLLYYILSFILLPVYFIIIFI) form a helical; Signal-anchor membrane-spanning segment. In terms of domain architecture, RPE1 insert spans 47–90 (SLLDLQMSVNQEGFKVDTEHKATSYVYIHRNASLMYKLSLERSY). The active-site Proton acceptor is Glu-104. Residues 308–309 (PR), 349–351 (FGE), and 374–377 (NILE) contribute to the CMP site.

It belongs to the glycosyltransferase group 1 family.

The protein resides in the cell inner membrane. The catalysed reaction is lipid IVA (E. coli) + CMP-3-deoxy-beta-D-manno-octulosonate = alpha-Kdo-(2-&gt;6)-lipid IVA (E. coli) + CMP + H(+). The protein operates within bacterial outer membrane biogenesis; LPS core biosynthesis. In terms of biological role, involved in lipopolysaccharide (LPS) biosynthesis. Catalyzes the transfer of 3-deoxy-D-manno-octulosonate (Kdo) residue(s) from CMP-Kdo to lipid IV(A), the tetraacyldisaccharide-1,4'-bisphosphate precursor of lipid A. The sequence is that of 3-deoxy-D-manno-octulosonic acid transferase (waaA) from Rickettsia typhi (strain ATCC VR-144 / Wilmington).